Consider the following 312-residue polypeptide: Glutathione synthetase (312 aa).

One can recognise an ATP-grasp domain in the interval 125-309; the sequence is KIFVTEFPDL…IAALFWDAVE (185 aa). Residue 151–207 participates in ATP binding; that stretch reads RREFGDIILKPLYGNGGAGVFHLADGDRNLTSLLEMFGQLFREPFIAQRYLKDVRAG. Residues Glu280 and Asn282 each contribute to the Mg(2+) site.

Belongs to the prokaryotic GSH synthase family. Requires Mg(2+) as cofactor. Mn(2+) serves as cofactor.

It catalyses the reaction gamma-L-glutamyl-L-cysteine + glycine + ATP = glutathione + ADP + phosphate + H(+). It participates in sulfur metabolism; glutathione biosynthesis; glutathione from L-cysteine and L-glutamate: step 2/2. The protein is Glutathione synthetase of Brucella melitensis biotype 1 (strain ATCC 23456 / CCUG 17765 / NCTC 10094 / 16M).